Here is a 664-residue protein sequence, read N- to C-terminus: L-glutamate oxidase precursor (664 aa).

Residues 1–44 (MTEDHAVVRSDGGLSRRSFAAVAGTATVATALTSGVAAALPAPA) constitute a signal peptide (tat-type signal). Residues Ala105, Glu124, Ala125, Arg133, Met161, Arg162, Asp638, Trp646, and Ile647 each coordinate FAD.

The protein belongs to the flavin monoamine oxidase family. LGOX subfamily. The mature enzyme is a heterohexamer composed of 2 alpha chains, 2 beta chains and 2 gamma chains (alpha2beta2gamma2). The cofactor is FAD. Predicted to be exported by the Tat system. The position of the signal peptide cleavage has not been experimentally proven. Post-translationally, the precursor form is proteolytically cleaved by an endopeptidase into alpha, beta and gamma chains, which form the stable mature enzyme.

It localises to the secreted. It carries out the reaction L-glutamate + O2 + H2O = H2O2 + 2-oxoglutarate + NH4(+). Activity is stimulated in the presence of Mn(2+), Ca(2+) or Mg(2+). In terms of biological role, catalyzes the oxidative deamination of L-glutamate to 2-ketoglutarate along with the production of ammonia and hydrogen peroxide. This is L-glutamate oxidase precursor from Streptomyces viridosporus (strain ATCC 14672 / DSM 40746 / JCM 4963 / KCTC 9882 / NRRL B-12104 / FH 1290) (Streptomyces ghanaensis).